The primary structure comprises 331 residues: Gem-associated protein 2 (331 aa).

Disordered regions lie at residues 1–23 (MDEFQSKAFEVGEEIEPDDNEPL), 101–130 (SNRPSNNNNNNNNNNNNNNNNNNNNNLIPQ), and 151–222 (NNNN…TKKP). The span at 11–21 (VGEEIEPDDNE) shows a compositional bias: acidic residues. The span at 106 to 126 (NNNNNNNNNNNNNNNNNNNNN) shows a compositional bias: low complexity. Acidic residues predominate over residues 165–215 (DNQEDDDDDENNEDYEYNENKEEEEEEEEEEEEEEEVEEEEEEEEEEEEVV). Positions 173–224 (DENNEDYEYNENKEEEEEEEEEEEEEEEVEEEEEEEEEEEEVVDYSTKKPTL) form a coiled coil.

It belongs to the gemin-2 family.

It localises to the nucleus. Its subcellular location is the gem. The protein resides in the cytoplasm. Its function is as follows. The SMN complex catalyzes the assembly of small nuclear ribonucleoproteins (snRNPs), the building blocks of the spliceosome, and thereby plays an important role in the splicing of cellular pre-mRNAs. Most spliceosomal snRNPs contain a common set of Sm proteins SNRPB, SNRPD1, SNRPD2, SNRPD3, SNRPE, SNRPF and SNRPG that assemble in a heptameric protein ring on the Sm site of the small nuclear RNA to form the core snRNP (Sm core). In the cytosol, the Sm proteins SNRPD1, SNRPD2, SNRPE, SNRPF and SNRPG (5Sm) are trapped in an inactive 6S pICln-Sm complex by the chaperone CLNS1A that controls the assembly of the core snRNP. To assemble core snRNPs, the SMN complex accepts the trapped 5Sm proteins from CLNS1A. Binding of snRNA inside 5Sm ultimately triggers eviction of the SMN complex, thereby allowing binding of SNRPD3 and SNRPB to complete assembly of the core snRNP. Within the SMN complex, GEMIN2 constrains the conformation of 5Sm, thereby promoting 5Sm binding to snRNA containing the snRNP code (a nonameric Sm site and a 3'-adjacent stem-loop), thus preventing progression of assembly until a cognate substrate is bound. Functionally, may play an essential role in spliceosomal snRNP assembly in the cytoplasm and may be required for pre-mRNA splicing in the nucleus. The protein is Gem-associated protein 2 (gemin2) of Dictyostelium discoideum (Social amoeba).